A 141-amino-acid chain; its full sequence is 3-hydroxyacyl-[acyl-carrier-protein] dehydratase FabZ (141 aa).

H48 is a catalytic residue.

This sequence belongs to the thioester dehydratase family. FabZ subfamily.

The protein localises to the cytoplasm. It catalyses the reaction a (3R)-hydroxyacyl-[ACP] = a (2E)-enoyl-[ACP] + H2O. In terms of biological role, involved in unsaturated fatty acids biosynthesis. Catalyzes the dehydration of short chain beta-hydroxyacyl-ACPs and long chain saturated and unsaturated beta-hydroxyacyl-ACPs. This is 3-hydroxyacyl-[acyl-carrier-protein] dehydratase FabZ from Bacillus subtilis (strain 168).